Consider the following 318-residue polypeptide: MLTKEFAQRVELSEKQVRKIVQHLEERGYQLSKTEYRGREATDFKEEDIELFKDIADKVKQTNSYDLAFDELEKEKDFLQVIVKNDDKNLPTNQNVAQLVEDLRLEIQKMREERHLLGQMMNQVHQQQQELKELQNQLTSKIDSNSESLKAIQTSQEAIQEAQASQAKVLAESTNKVEKNAVTEDKADSKDSKVAGVNTSTDAKTDTKAENAGDGTATKVDKEDQISATEAIEKASVEQSKNENAAETSNKEATVDADAQHDAEQQVAEAHAEASKQATSNDSLEAKAENDSTASQSEMSEPKPQEEKKGFFARLFNL.

The stretch at 67–157 (LAFDELEKEK…SLKAIQTSQE (91 aa)) forms a coiled coil. The tract at residues 172–318 (ESTNKVEKNA…KGFFARLFNL (147 aa)) is disordered. Composition is skewed to basic and acidic residues over residues 175-193 (NKVE…KDSK) and 219-236 (KVDK…EKAS). Positions 237–248 (VEQSKNENAAET) are enriched in polar residues. Composition is skewed to basic and acidic residues over residues 249–274 (SNKE…HAEA) and 300–310 (SEPKPQEEKKG).

This is an uncharacterized protein from Staphylococcus aureus (strain Mu50 / ATCC 700699).